A 580-amino-acid chain; its full sequence is 2-succinyl-5-enolpyruvyl-6-hydroxy-3-cyclohexene-1-carboxylate synthase (580 aa).

Belongs to the TPP enzyme family. MenD subfamily. As to quaternary structure, homodimer. The cofactor is Mg(2+). Requires Mn(2+) as cofactor. Thiamine diphosphate is required as a cofactor.

The catalysed reaction is isochorismate + 2-oxoglutarate + H(+) = 5-enolpyruvoyl-6-hydroxy-2-succinyl-cyclohex-3-ene-1-carboxylate + CO2. It functions in the pathway quinol/quinone metabolism; 1,4-dihydroxy-2-naphthoate biosynthesis; 1,4-dihydroxy-2-naphthoate from chorismate: step 2/7. The protein operates within quinol/quinone metabolism; menaquinone biosynthesis. Its function is as follows. Catalyzes the thiamine diphosphate-dependent decarboxylation of 2-oxoglutarate and the subsequent addition of the resulting succinic semialdehyde-thiamine pyrophosphate anion to isochorismate to yield 2-succinyl-5-enolpyruvyl-6-hydroxy-3-cyclohexene-1-carboxylate (SEPHCHC). The polypeptide is 2-succinyl-5-enolpyruvyl-6-hydroxy-3-cyclohexene-1-carboxylate synthase (Listeria monocytogenes serovar 1/2a (strain ATCC BAA-679 / EGD-e)).